A 436-amino-acid polypeptide reads, in one-letter code: 23S rRNA (uracil(1939)-C(5))-methyltransferase RlmD (436 aa).

Residues 10-68 (KQKTTQKIVAEIQDLDYQGLGVAKIQGKTWFIENALPTEKVEAVVTDEKRQYGLATAQK) form the TRAM domain. The [4Fe-4S] cluster site is built by cysteine 81, cysteine 87, cysteine 90, and cysteine 168. The S-adenosyl-L-methionine site is built by glutamine 270, phenylalanine 299, asparagine 304, glutamate 320, aspartate 347, and aspartate 368. Cysteine 394 functions as the Nucleophile in the catalytic mechanism.

It belongs to the class I-like SAM-binding methyltransferase superfamily. RNA M5U methyltransferase family. RlmD subfamily.

It catalyses the reaction uridine(1939) in 23S rRNA + S-adenosyl-L-methionine = 5-methyluridine(1939) in 23S rRNA + S-adenosyl-L-homocysteine + H(+). Its function is as follows. Catalyzes the formation of 5-methyl-uridine at position 1939 (m5U1939) in 23S rRNA. The polypeptide is 23S rRNA (uracil(1939)-C(5))-methyltransferase RlmD (Haemophilus parainfluenzae (strain T3T1)).